We begin with the raw amino-acid sequence, 316 residues long: MASADELTFHEFEEATNLLADTPDAATTSRSDQLTPQGHVAVAVGSGGSYGAEDEVEEESDKAALLQEQQQQQQPGFWTFSYYQSFFDVDTSQVLDRIKGSLLPRPGHNFVRHHLRNRPDLYGPFWICATLAFVLAVTGNLTLVLAQRRDPSIHYSPQFHKVTVAGISIYCYAWLVPLALWGFLRWRKGVQERMGPYTFLETVCIYGYSLFVFIPMVVLWLIPVPWLQWLFGALALGLSAAGLVFTLWPVVREDTRLVATVLLSVVVLLHALLAMGCKLYFFQSLPPENVAPPPQITSLPSNIALSPTLPQSLAPS.

Residue alanine 2 is modified to N-acetylalanine. Residues 2-124 are Cytoplasmic-facing; it reads ASADELTFHE…LRNRPDLYGP (123 aa). The disordered stretch occupies residues 16 to 37; the sequence is TNLLADTPDAATTSRSDQLTPQ. Residues 25–36 show a composition bias toward polar residues; the sequence is AATTSRSDQLTP. The helical transmembrane segment at 125–145 threads the bilayer; that stretch reads FWICATLAFVLAVTGNLTLVL. Residues 146 to 163 lie on the Lumenal side of the membrane; that stretch reads AQRRDPSIHYSPQFHKVT. A helical membrane pass occupies residues 164-184; sequence VAGISIYCYAWLVPLALWGFL. Residues 185–196 are Cytoplasmic-facing; that stretch reads RWRKGVQERMGP. The helical transmembrane segment at 197 to 219 threads the bilayer; the sequence is YTFLETVCIYGYSLFVFIPMVVL. Over 220–231 the chain is Lumenal; sequence WLIPVPWLQWLF. The chain crosses the membrane as a helical span at residues 232–252; the sequence is GALALGLSAAGLVFTLWPVVR. At 253-256 the chain is on the cytoplasmic side; it reads EDTR. A helical transmembrane segment spans residues 257–277; the sequence is LVATVLLSVVVLLHALLAMGC. Residues 278–316 are Lumenal-facing; the sequence is KLYFFQSLPPENVAPPPQITSLPSNIALSPTLPQSLAPS.

The protein belongs to the YIP1 family. As to quaternary structure, interacts with YIPF6; this interaction may stabilize YIPF2. May also form a ternary complex with YIPF1 and YIPF6.

The protein resides in the golgi apparatus. It localises to the cis-Golgi network membrane. Its subcellular location is the trans-Golgi network membrane. The protein localises to the late endosome membrane. The chain is Protein YIPF2 (YIPF2) from Homo sapiens (Human).